We begin with the raw amino-acid sequence, 284 residues long: Aquaporin NIP1-1 (284 aa).

Positions 1–12 (MAGGDNNSQTTN) are enriched in polar residues. Positions 1–28 (MAGGDNNSQTTNGGSGHEQRAMEEGRKQ) are disordered. Residues 17-28 (HEQRAMEEGRKQ) show a composition bias toward basic and acidic residues. The next 2 membrane-spanning stretches (helical) occupy residues 50–70 (IIAEIFGTYFLIFAGCGAVTI) and 78–98 (ITFPGVAIVWGLAVMVMVYAV). An NPA 1 motif is present at residues 107–109 (NPA). The next 3 membrane-spanning stretches (helical) occupy residues 129-149 (AAAQMLGATLAAGTLRLMFGG), 166-186 (SLVLEFIITFYLMFVISGVAT), and 194-214 (LAGLAVGATILLNVLIAGPIS). Residues 219–221 (NPA) carry the NPA 2 motif. Residues 236-256 (IWVYIVGPVAGAVAGAWAYNI) form a helical membrane-spanning segment.

The protein belongs to the MIP/aquaporin (TC 1.A.8) family. NIP (TC 1.A.8.12) subfamily. In terms of tissue distribution, expressed in leaves and at lower levels in roots and anthers.

The protein resides in the membrane. In terms of biological role, aquaporins facilitate the transport of water and small neutral solutes across cell membranes. The polypeptide is Aquaporin NIP1-1 (NIP1-1) (Oryza sativa subsp. japonica (Rice)).